Consider the following 264-residue polypeptide: Thymidylate synthase (264 aa).

Arg21 lines the dUMP pocket. Residue His51 coordinates (6R)-5,10-methylene-5,6,7,8-tetrahydrofolate. 126–127 (RR) provides a ligand contact to dUMP. Cys146 acts as the Nucleophile in catalysis. DUMP contacts are provided by residues 166–169 (RSVD), Asn177, and 207–209 (HLY). Asp169 is a binding site for (6R)-5,10-methylene-5,6,7,8-tetrahydrofolate. Ala263 is a binding site for (6R)-5,10-methylene-5,6,7,8-tetrahydrofolate.

Belongs to the thymidylate synthase family. Bacterial-type ThyA subfamily. As to quaternary structure, homodimer.

It localises to the cytoplasm. It carries out the reaction dUMP + (6R)-5,10-methylene-5,6,7,8-tetrahydrofolate = 7,8-dihydrofolate + dTMP. It participates in pyrimidine metabolism; dTTP biosynthesis. In terms of biological role, catalyzes the reductive methylation of 2'-deoxyuridine-5'-monophosphate (dUMP) to 2'-deoxythymidine-5'-monophosphate (dTMP) while utilizing 5,10-methylenetetrahydrofolate (mTHF) as the methyl donor and reductant in the reaction, yielding dihydrofolate (DHF) as a by-product. This enzymatic reaction provides an intracellular de novo source of dTMP, an essential precursor for DNA biosynthesis. This is Thymidylate synthase from Geobacillus thermodenitrificans (strain NG80-2).